The chain runs to 221 residues: 7-cyano-7-deazaguanine synthase (221 aa).

Residue 7–17 (LSGGMDSSTLA) participates in ATP binding. Zn(2+) is bound by residues Cys-187, Cys-195, Cys-198, and Cys-201.

The protein belongs to the QueC family. Zn(2+) serves as cofactor.

The catalysed reaction is 7-carboxy-7-deazaguanine + NH4(+) + ATP = 7-cyano-7-deazaguanine + ADP + phosphate + H2O + H(+). Its pathway is purine metabolism; 7-cyano-7-deazaguanine biosynthesis. Functionally, catalyzes the ATP-dependent conversion of 7-carboxy-7-deazaguanine (CDG) to 7-cyano-7-deazaguanine (preQ(0)). The polypeptide is 7-cyano-7-deazaguanine synthase (Methanosphaerula palustris (strain ATCC BAA-1556 / DSM 19958 / E1-9c)).